The primary structure comprises 466 residues: Myocardial zonula adherens protein (466 aa).

A compositionally biased stretch (polar residues) spans 1 to 10 (MLRSTSTVTL). The signal sequence occupies residues 1–20 (MLRSTSTVTLLSGGAARTPG). The interval 1 to 23 (MLRSTSTVTLLSGGAARTPGAPS) is disordered. 2 coiled-coil regions span residues 96 to 142 (QLKE…SHAQ) and 174 to 418 (LQKT…TQAK). The Required for DYNLL1-binding signature appears at 424–425 (RE).

Belongs to the MYZAP family. As to quaternary structure, interacts with DSP, MPRIP and TJP1/ZO1. Interaction with MPRIP inhibits the activation of transcription factor SRF. Interacts with GRIN1. Interacts with DYNLL1. Detected in heart, liver, skeletal muscle, placenta, small intestine, lung, prostate and testis. Expressed in arrector pili muscle (at protein level).

The protein resides in the cytoplasm. The protein localises to the cytoskeleton. Its subcellular location is the cell membrane. It is found in the myofibril. It localises to the sarcomere. The protein resides in the i band. The protein localises to the z line. Its subcellular location is the cell junction. Plays a role in cellular signaling via Rho-related GTP-binding proteins and subsequent activation of transcription factor SRF. Targets TJP1 to cell junctions. In cortical neurons, may play a role in glutaminergic signal transduction through interaction with the NMDA receptor subunit GRIN1. The sequence is that of Myocardial zonula adherens protein (MYZAP) from Homo sapiens (Human).